Here is a 506-residue protein sequence, read N- to C-terminus: MKQILFMDTTLRDGEQSPGVNLNEQEKLQIARQLERLGIHVMEAGFAAASEGDFQSVKRIANTIQNATVMSLARAKESDIRRAYEAVKGAVSPRLHVFLATSDIHMKYKLCMSKEDVLDSIYRSVTLGKSLFPTVQFSAEDATRTARDFLAEAVEVAIRAGANVINIPDTVGYTNPEEYYALFKYLQESVPSYEKAIFSCHCHDDLGMAVANSLAAVEGGALQVEGTINGIGERAGNAALEEVAVALHIRKDFYKAEPSMTLKEIKATSTLVSRLTGMVVSKNKAIVGANAFAHESGIHQDGVLKEVTTYEIIEPALVGESQNLFVLGKHSGRHAFTEKMKELGYEFTNDERDAVFEAFKKLADRKKEITEEDLRALMLGEAAFAAQQYNITQLQVHFVSNSTQCATVVLKDEEGNVFEDAATGSGSIEAIYNAIQRILGLECELADYRIQSITQGQDALAHVHVELKEGAHQVSGFGVAQDVLEASARAYVHAAGKLKSFIQLVK.

The Pyruvate carboxyltransferase domain occupies 4–266 (ILFMDTTLRD…EPSMTLKEIK (263 aa)). Positions 13, 201, 203, and 237 each coordinate Mn(2+). A regulatory domain region spans residues 390-506 (NITQLQVHFV…KLKSFIQLVK (117 aa)).

Belongs to the alpha-IPM synthase/homocitrate synthase family. LeuA type 1 subfamily. Homodimer. The cofactor is Mn(2+).

Its subcellular location is the cytoplasm. It catalyses the reaction 3-methyl-2-oxobutanoate + acetyl-CoA + H2O = (2S)-2-isopropylmalate + CoA + H(+). It functions in the pathway amino-acid biosynthesis; L-leucine biosynthesis; L-leucine from 3-methyl-2-oxobutanoate: step 1/4. Its function is as follows. Catalyzes the condensation of the acetyl group of acetyl-CoA with 3-methyl-2-oxobutanoate (2-ketoisovalerate) to form 3-carboxy-3-hydroxy-4-methylpentanoate (2-isopropylmalate). In Bacillus anthracis (strain A0248), this protein is 2-isopropylmalate synthase.